The sequence spans 209 residues: Ribonuclease HII (209 aa).

The RNase H type-2 domain occupies 19–209; it reads CIIVGVDEVG…LPGITKLYSK (191 aa). A divalent metal cation is bound by residues Asp25, Glu26, and Asp118.

The protein belongs to the RNase HII family. It depends on Mn(2+) as a cofactor. Requires Mg(2+) as cofactor.

The protein localises to the cytoplasm. The enzyme catalyses Endonucleolytic cleavage to 5'-phosphomonoester.. In terms of biological role, endonuclease that specifically degrades the RNA of RNA-DNA hybrids. In Ehrlichia canis (strain Jake), this protein is Ribonuclease HII.